A 262-amino-acid chain; its full sequence is tRNA (guanine-N(7)-)-methyltransferase (262 aa).

Residues 1–58 (MLPQDTNTDPLPGDDAESASGKSADASQGTPNPGDEVAHPRRIRSFVRRAGRTSTGQQ) are disordered. Positions 40–51 (PRRIRSFVRRAG) are enriched in basic residues. Positions 92, 117, 144, and 167 each coordinate S-adenosyl-L-methionine. The active site involves aspartate 167. Residue lysine 171 coordinates substrate. The segment at 173 to 178 (RHNKRR) is interaction with RNA. Substrate-binding positions include aspartate 203 and 241 to 244 (TKFE).

It belongs to the class I-like SAM-binding methyltransferase superfamily. TrmB family.

The catalysed reaction is guanosine(46) in tRNA + S-adenosyl-L-methionine = N(7)-methylguanosine(46) in tRNA + S-adenosyl-L-homocysteine. It participates in tRNA modification; N(7)-methylguanine-tRNA biosynthesis. In terms of biological role, catalyzes the formation of N(7)-methylguanine at position 46 (m7G46) in tRNA. This Cupriavidus metallidurans (strain ATCC 43123 / DSM 2839 / NBRC 102507 / CH34) (Ralstonia metallidurans) protein is tRNA (guanine-N(7)-)-methyltransferase.